A 340-amino-acid polypeptide reads, in one-letter code: Alcohol dehydrogenase (340 aa).

Positions 37, 58, 89, 92, 95, 103, and 145 each coordinate Zn(2+).

The protein belongs to the zinc-containing alcohol dehydrogenase family. It depends on Zn(2+) as a cofactor.

It carries out the reaction a primary alcohol + NAD(+) = an aldehyde + NADH + H(+). It catalyses the reaction a secondary alcohol + NAD(+) = a ketone + NADH + H(+). This chain is Alcohol dehydrogenase (adh), found in Staphylococcus epidermidis (strain ATCC 12228 / FDA PCI 1200).